The sequence spans 294 residues: Secreted frizzled-related protein 2 (294 aa).

The N-terminal stretch at 1–24 is a signal peptide; sequence MPRGPGSLLLLVLASHCCLGSARG. An FZ domain is found at 34–154; the sequence is YKRSNCKPIP…PQDNDLCIPL (121 aa). 8 cysteine pairs are disulfide-bonded: C39–C102, C49–C95, C86–C124, C113–C151, C117–C141, C171–C244, C174–C246, and C189–C294. The NTR domain occupies 171–294; that stretch reads CEACKNKNED…ISRSIRKLQC (124 aa).

It belongs to the secreted frizzled-related protein (sFRP) family.

Its subcellular location is the secreted. Functionally, soluble frizzled-related proteins (sFRPS) function as modulators of Wnt signaling through direct interaction with Wnts. They have a role in regulating cell growth and differentiation in specific cell types. SFRP2 may be important for eye retinal development and for myogenesis. The protein is Secreted frizzled-related protein 2 (SFRP2) of Canis lupus familiaris (Dog).